We begin with the raw amino-acid sequence, 158 residues long: Ribosome maturation factor RimP (158 aa).

The protein belongs to the RimP family.

The protein localises to the cytoplasm. Functionally, required for maturation of 30S ribosomal subunits. The protein is Ribosome maturation factor RimP of Streptococcus uberis (strain ATCC BAA-854 / 0140J).